The primary structure comprises 394 residues: Aspergillopepsin-1 (394 aa).

The first 20 residues, methionine 1–alanine 20, serve as a signal peptide directing secretion. Positions alanine 21 to alanine 69 are cleaved as a propeptide — activation peptide. In terms of domain architecture, Peptidase A1 spans tyrosine 85–alanine 391. Active-site residues include aspartate 101 and aspartate 283. Cysteine 319 and cysteine 354 are disulfide-bonded.

The protein belongs to the peptidase A1 family. In terms of assembly, monomer.

It localises to the secreted. It carries out the reaction Hydrolysis of proteins with broad specificity. Generally favors hydrophobic residues in P1 and P1', but also accepts Lys in P1, which leads to activation of trypsinogen. Does not clot milk.. Secreted aspartic endopeptidase that allows assimilation of proteinaceous substrates. The scissile peptide bond is attacked by a nucleophilic water molecule activated by two aspartic residues in the active site. Shows a broad primary substrate specificity. Favors hydrophobic residues at the P1 and P1' positions, but also accepts a lysine residue in the P1 position, leading to the activation of trypsinogen and chymotrypsinogen A. The protein is Aspergillopepsin-1 (pepA) of Aspergillus clavatus (strain ATCC 1007 / CBS 513.65 / DSM 816 / NCTC 3887 / NRRL 1 / QM 1276 / 107).